The primary structure comprises 63 residues: Conotoxin Pu5.4 (63 aa).

The signal sequence occupies residues 1–22 (MRCVPVFVILLLLIASTPSVDA). Positions 23–50 (TQKTKDDMSLASFHDNAKRFLQTLRNTR) are excised as a propeptide. Trp-62 is modified (tryptophan amide).

It belongs to the conotoxin T superfamily. Contains 2 disulfide bonds that can be either 'C1-C3, C2-C4' or 'C1-C4, C2-C3', since these disulfide connectivities have been observed for conotoxins with cysteine framework V (for examples, see AC P0DQQ7 and AC P81755). In terms of tissue distribution, expressed by the venom duct.

It localises to the secreted. This chain is Conotoxin Pu5.4, found in Conus pulicarius (Flea-bitten cone).